The primary structure comprises 278 residues: NADPH-dependent 7-cyano-7-deazaguanine reductase (278 aa).

Residue isoleucine 87 to serine 89 participates in substrate binding. Serine 89–lysine 90 contributes to the NADPH binding site. The Thioimide intermediate role is filled by cysteine 185. The active-site Proton donor is aspartate 192. Position 224 to 225 (histidine 224 to glutamate 225) interacts with substrate. Position 253 to 254 (arginine 253 to glycine 254) interacts with NADPH. The segment at glycine 255–glutamine 278 is disordered. The segment covering tyrosine 261–glutamine 278 has biased composition (polar residues).

The protein belongs to the GTP cyclohydrolase I family. QueF type 2 subfamily. As to quaternary structure, homodimer.

Its subcellular location is the cytoplasm. The enzyme catalyses 7-aminomethyl-7-carbaguanine + 2 NADP(+) = 7-cyano-7-deazaguanine + 2 NADPH + 3 H(+). It participates in tRNA modification; tRNA-queuosine biosynthesis. Functionally, catalyzes the NADPH-dependent reduction of 7-cyano-7-deazaguanine (preQ0) to 7-aminomethyl-7-deazaguanine (preQ1). This chain is NADPH-dependent 7-cyano-7-deazaguanine reductase, found in Coxiella burnetii (strain Dugway 5J108-111).